Reading from the N-terminus, the 522-residue chain is Maturase K (522 aa).

Belongs to the intron maturase 2 family. MatK subfamily.

The protein localises to the plastid. It is found in the chloroplast. Usually encoded in the trnK tRNA gene intron. Probably assists in splicing its own and other chloroplast group II introns. The protein is Maturase K of Tigridia pavonia (Mexican shell flower).